Consider the following 178-residue polypeptide: Cell division protein SepF (178 aa).

Over residues 21–46 the composition is skewed to basic and acidic residues; that stretch reads YESEQSVATHHDEERPQAQEREERRA. The tract at residues 21 to 65 is disordered; it reads YESEQSVATHHDEERPQAQEREERRAPAPVREVVREMPTVDAEEE.

The protein belongs to the SepF family. Homodimer. Interacts with FtsZ.

The protein resides in the cytoplasm. Cell division protein that is part of the divisome complex and is recruited early to the Z-ring. Probably stimulates Z-ring formation, perhaps through the cross-linking of FtsZ protofilaments. Its function overlaps with FtsA. The polypeptide is Cell division protein SepF (Paenarthrobacter aurescens (strain TC1)).